The following is a 586-amino-acid chain: Thioredoxin domain-containing protein 3 (586 aa).

The 107-residue stretch at 10 to 116 (LQSVVNSQNL…NRKVITLIDE (107 aa)) folds into the Thioredoxin domain. The cysteines at positions 39 and 42 are disulfide-linked. NDK stretches follow at residues 157–254 (MAII…VLEE), 312–452 (VQTT…STLA), and 453–586 (LIKP…NPEN).

It in the C-terminal section; belongs to the NDK family. Monomer. In terms of tissue distribution, testis-specific. Expressed mainly in round spermatids.

It localises to the cytoplasm. Probably required during the final stages of sperm tail maturation in the testis and/or epididymis, where extensive disulfide bonding of fibrous sheath (FS) proteins occurs. In vitro, it has neither nucleoside diphosphate kinase (NDPK) activity nor reducing activity on disulfide bonds. Exhibits a 3'-5' exonuclease activity with a preference for single-stranded DNA, suggesting roles in DNA proofreading and repair. This is Thioredoxin domain-containing protein 3 (Nme8) from Mus musculus (Mouse).